We begin with the raw amino-acid sequence, 30 residues long: ALKDEFEEHAEKAKTLPENTSNENKLILYG.

The span at 1-15 (ALKDEFEEHAEKAKT) shows a compositional bias: basic and acidic residues. The interval 1 to 30 (ALKDEFEEHAEKAKTLPENTSNENKLILYG) is disordered. Residues 2–30 (LKDEFEEHAEKAKTLPENTSNENKLILYG) form the ACB domain.

Belongs to the ACBP family.

It is found in the cytoplasm. Binds medium- and long-chain acyl-CoA esters with very high affinity and may function as an intracellular carrier of acyl-CoA esters. The sequence is that of Acyl-CoA-binding protein 1 from Digitalis lanata (Grecian foxglove).